A 328-amino-acid polypeptide reads, in one-letter code: Delta(3,5)-Delta(2,4)-dienoyl-CoA isomerase, mitochondrial (328 aa).

The transit peptide at 1 to 33 (MAAGIVASRRLRDLLTRRLTGSNYPGLSISLRL) directs the protein to the mitochondrion. Substrate contacts are provided by residues 116–120 (AGIDL) and Gly174. Position 231 is an N6-succinyllysine (Lys231). Position 268 is a phosphoserine (Ser268). Residues 326–328 (SKL) carry the Microbody targeting signal motif. Lys327 is modified (N6-acetyllysine).

Belongs to the enoyl-CoA hydratase/isomerase family. As to quaternary structure, homohexamer.

The protein resides in the mitochondrion. It localises to the peroxisome. The catalysed reaction is (3E,5Z)-octadienoyl-CoA = (2E,4E)-octadienoyl-CoA. It catalyses the reaction (3E,5Z,8Z,11Z,14Z)-eicosapentaenoyl-CoA = (2E,4E,8Z,11Z,14Z)-eicosapentaenoyl-CoA. Its pathway is lipid metabolism; fatty acid beta-oxidation. Functionally, isomerization of 3-trans,5-cis-dienoyl-CoA to 2-trans,4-trans-dienoyl-CoA. This Homo sapiens (Human) protein is Delta(3,5)-Delta(2,4)-dienoyl-CoA isomerase, mitochondrial.